The primary structure comprises 425 residues: Histone-binding protein RBBP4 (425 aa).

Residue A2 is modified to N-acetylalanine. K4 carries the post-translational modification N6-acetyllysine; alternate. K4 is covalently cross-linked (Glycyl lysine isopeptide (Lys-Gly) (interchain with G-Cter in SUMO2); alternate). K4 is covalently cross-linked (Glycyl lysine isopeptide (Lys-Gly) (interchain with G-Cter in ubiquitin); alternate). WD repeat units lie at residues 32–125 (YDLV…NHEG), 126–175 (EVNR…RLRG), 176–223 (HQKE…KTIF), 225–270 (GHTA…HSVD), 271–314 (AHTA…HSFE), 315–371 (SHKD…FIHG), and 372–404 (GHTA…VWQM). S110 carries the post-translational modification Phosphoserine. K160 is subject to N6-acetyllysine; alternate. K160 is covalently cross-linked (Glycyl lysine isopeptide (Lys-Gly) (interchain with G-Cter in SUMO2); alternate). S355 carries the post-translational modification Phosphoserine.

Belongs to the WD repeat RBAP46/RBAP48/MSI1 family. Binds directly to helix 1 of the histone fold of histone H4, a region that is not accessible when H4 is in chromatin. Subunit of the chromatin assembly factor 1 (CAF-1) complex, which is composed of RBBP4, CHAF1B and CHAF1A. Subunit of the core histone deacetylase (HDAC) complex, which is composed of HDAC1, HDAC2, RBBP4 and RBBP7. The core HDAC complex associates with SIN3A, ARID4B/SAP180, SAP18, SAP30, SAP130, SUDS3/SAP45 and possibly ARID4A/RBP1 and ING1 to form the SIN3 HDAC complex. Component of the nucleosome remodeling and deacetylase (NuRD) repressor complex, composed of core proteins MTA1, MTA2, MTA3, RBBP4, RBBP7, HDAC1, HDAC2, MBD2, MBD3, and peripherally associated proteins CDK2AP1, CDK2AP2, GATAD2A, GATAD2B, CHD3, CHD4 and CHD5. The exact stoichiometry of the NuRD complex is unknown, and some subunits such as MBD2 and MBD3, GATAD2A and GATAD2B, and CHD3, CHD4 and CHD5 define mutually exclusive NuRD complexes. Interacts with ZNF512B; the interaction is direct and may play a role in repressing gene expression. The NuRD complex may also interact with MBD3L1 and MBD3L2. Component of the PRC2 complex, which consists of the core subunits EED, EZH1 or EZH2, SUZ12, and RBBP4, and various combinations of accessory subunits including AEBP2, JARID2, PHF19, MTF2 and EPOP. Forms a monomeric PRC2.2 (class 2) complex consisting of at least SUZ12, RBBP4, AEBP2 and JARID2. Forms a dimeric PRC2.1 (class 1, PRC-PCL) complex consisting of at least SUZ12, RBBP4, and PHF19; PHF19 stabilizes the dimeric structure which enhances PRC2 interaction with chromatin. Component of the NURF-1 ISWI chromatin remodeling complex (also called the nucleosome-remodeling factor (NURF) complex) at least composed of SMARCA1 (isoform 2), BPTF, RBBP4 and RBBP7. Within the complex interacts with isoform 2 of SMARCA1. Component of the BPFT-SMARCA1 complex at least composed of SMARCA1 (isoform 1), BPFT, RBBP4 and RBBP7; the complex is catalytically inactive and does not remodel chromatin. Within the complex interacts with isoform 1 of SMARCA1. Interacts with the ISWI chromatin remodeling complex component SMARCA5; the interaction is direct. Interacts with the viral protein-binding domain of the retinoblastoma protein (RB1). Component of the DREAM complex (also named LINC complex) at least composed of E2F4, E2F5, LIN9, LIN37, LIN52, LIN54, MYBL1, MYBL2, RBL1, RBL2, RBBP4, TFDP1 and TFDP2. The complex exists in quiescent cells where it represses cell cycle-dependent genes. It dissociates in S phase when LIN9, LIN37, LIN52 and LIN54 form a subcomplex that binds to MYBL2. Found in a complex composed of at least SINHCAF, SIN3A, HDAC1, SAP30, RBBP4, OGT and TET1. Interacts with ZNF827; the interaction is direct and recruits RBBP4 to telomeres. Interacts with MTA1; the interaction is direct and mutually exclusive with binding histone H4. Interacts with ARMC12 (via ARM domains). Interacts with BRCA1. Interacts with CDK2AP1. Interacts with CREBBP, and this interaction may be enhanced by the binding of phosphorylated CREB1 to CREBBP. Interacts with ERCC6. Interacts with HDAC7. Interacts with PHF6. Interacts with PWWP2B. Interacts with SPEN/MINT. Interacts with SUV39H1.

Its subcellular location is the nucleus. It is found in the chromosome. The protein localises to the telomere. Core histone-binding subunit that may target chromatin assembly factors, chromatin remodeling factors and histone deacetylases to their histone substrates in a manner that is regulated by nucleosomal DNA. Component of the chromatin assembly factor 1 (CAF-1) complex, which is required for chromatin assembly following DNA replication and DNA repair. Component of the core histone deacetylase (HDAC) complex, which promotes histone deacetylation and consequent transcriptional repression. Component of the nucleosome remodeling and histone deacetylase complex (the NuRD complex), which promotes transcriptional repression by histone deacetylation and nucleosome remodeling. Component of the PRC2 complex, which promotes repression of homeotic genes during development. Component of the NURF (nucleosome remodeling factor) complex. The sequence is that of Histone-binding protein RBBP4 (RBBP4) from Bos taurus (Bovine).